Consider the following 142-residue polypeptide: UPF0310 protein PYRAB08750 (142 aa).

The protein belongs to the UPF0310 family.

The sequence is that of UPF0310 protein PYRAB08750 from Pyrococcus abyssi (strain GE5 / Orsay).